Reading from the N-terminus, the 494-residue chain is 4-trimethylaminobutyraldehyde dehydrogenase (494 aa).

Residue S2 is modified to N-acetylserine. K30 bears the N6-acetyllysine; alternate mark. Residue K30 is modified to N6-succinyllysine; alternate. The residue at position 59 (K59) is an N6-succinyllysine. NAD(+) is bound by residues K180 and 232–236 (GSVPT). E254 functions as the Proton acceptor in the catalytic mechanism. C288 serves as the catalytic Nucleophile. Residue K298 is modified to N6-acetyllysine. Residue E391 participates in NAD(+) binding.

It belongs to the aldehyde dehydrogenase family. Homotetramer. As to expression, detected in lever (at protein level).

Its subcellular location is the cytoplasm. It is found in the cytosol. It catalyses the reaction 4-(trimethylamino)butanal + NAD(+) + H2O = 4-(trimethylamino)butanoate + NADH + 2 H(+). The catalysed reaction is an aldehyde + NAD(+) + H2O = a carboxylate + NADH + 2 H(+). The enzyme catalyses 4-aminobutanal + NAD(+) + H2O = 4-aminobutanoate + NADH + 2 H(+). It carries out the reaction formaldehyde + NAD(+) + H2O = formate + NADH + 2 H(+). It catalyses the reaction acetaldehyde + NAD(+) + H2O = acetate + NADH + 2 H(+). The catalysed reaction is imidazole-4-acetaldehyde + NAD(+) + H2O = imidazole-4-acetate + NADH + 2 H(+). The enzyme catalyses acrolein + NAD(+) + H2O = acrylate + NADH + 2 H(+). It carries out the reaction (5-hydroxyindol-3-yl)acetaldehyde + NAD(+) + H2O = (5-hydroxyindol-3-yl)acetate + NADH + 2 H(+). It catalyses the reaction 3,4-dihydroxyphenylacetaldehyde + NAD(+) + H2O = 3,4-dihydroxyphenylacetate + NADH + 2 H(+). The catalysed reaction is spermine monoaldehyde + NAD(+) + H2O = N-(2-carboxyethyl)spermidine + NADH + 2 H(+). The enzyme catalyses propanal + NAD(+) + H2O = propanoate + NADH + 2 H(+). It carries out the reaction butanal + NAD(+) + H2O = butanoate + NADH + 2 H(+). It catalyses the reaction pentanal + NAD(+) + H2O = pentanoate + NADH + 2 H(+). The catalysed reaction is hexanal + NAD(+) + H2O = hexanoate + NADH + 2 H(+). The protein operates within amine and polyamine biosynthesis; carnitine biosynthesis. In terms of biological role, converts gamma-trimethylaminobutyraldehyde into gamma-butyrobetaine with high efficiency (in vitro). Can catalyze the irreversible oxidation of a broad range of aldehydes to the corresponding acids in an NAD-dependent reaction, but with low efficiency. Catalyzes the oxidation of aldehydes arising from biogenic amines and polyamines. The chain is 4-trimethylaminobutyraldehyde dehydrogenase (Aldh9a1) from Rattus norvegicus (Rat).